A 405-amino-acid polypeptide reads, in one-letter code: Envelope glycoprotein M (405 aa).

The Intravirion portion of the chain corresponds to 1-17 (MKSSKNDTFVYRTWVKT). A helical membrane pass occupies residues 18 to 38 (LVVYFVMFVMSAVVPITAMFP). Residues 39–76 (NLGYPCYFNALVDYGALNLTNYNLAHHLTPTLYLEPPE) are Virion surface-facing. A helical membrane pass occupies residues 77–97 (MFVYITLVFIADCVAFIYYAC). The Intravirion segment spans residues 98–121 (GEVALIKARKKVSGLTDLSAWVSA). A helical membrane pass occupies residues 122–142 (VGSPTVLFLAILKLWSIQVFI). The Virion surface portion of the chain corresponds to 143 to 149 (QVLSYKH). The helical transmembrane segment at 150–170 (VFLSAFVYFLHFLASVLHACA) threads the bilayer. Residues 171–192 (CVTRFSPVWVVKAQDNSIPQDT) lie on the Intravirion side of the membrane. The helical transmembrane segment at 193–215 (FLWWVVFYLKPVVTNLYLGCLAL) threads the bilayer. Residues 216 to 245 (ETLVFSLSVFLALGNSFYFMVGDMVLGAVN) are Virion surface-facing. The chain crosses the membrane as a helical span at residues 246-266 (LFLILPIFWYILTEVWLASFM). A topological domain (intravirion) is located at residue R267. The chain crosses the membrane as a helical span at residues 268 to 288 (HNFGFYCGMFIASIILILPLV). Over 289–299 (RYEAVFVSAKL) the chain is Virion surface. Residues 300–320 (HTTVAINVAIIPILCSVAMLI) form a helical membrane-spanning segment. Over 321–405 (RICRIFKSMR…TTDSEEEIFP (85 aa)) the chain is Intravirion. The interval 346–405 (LESEPRPRPSRTPSPGRNRRRSSTSSSSSRSTRRQRPVSTQALVSSVLPMTTDSEEEIFP) is disordered. Positions 386 to 397 (QALVSSVLPMTT) are enriched in polar residues.

It belongs to the herpesviridae glycoprotein M family. In terms of assembly, interacts (via N-terminus) with gN (via N-terminus). The gM-gN heterodimer forms the gCII complex.

The protein resides in the virion membrane. It is found in the host Golgi apparatus. Its subcellular location is the host trans-Golgi network. The protein localises to the host endosome membrane. It localises to the host nucleus inner membrane. Functionally, envelope glycoprotein important for virion assembly and egress. Plays a role in the correct incorporation of gH-gL into virion membrane. Directs the glycoprotein N (gN) to the host trans-Golgi network. This is Envelope glycoprotein M from Epstein-Barr virus (strain GD1) (HHV-4).